We begin with the raw amino-acid sequence, 616 residues long: Chaperone protein HscA homolog (616 aa).

Belongs to the heat shock protein 70 family.

Chaperone involved in the maturation of iron-sulfur cluster-containing proteins. Has a low intrinsic ATPase activity which is markedly stimulated by HscB. The protein is Chaperone protein HscA homolog of Mannheimia succiniciproducens (strain KCTC 0769BP / MBEL55E).